The chain runs to 586 residues: Estrogen receptor (586 aa).

The tract at residues 1 to 179 (MTMPLPNKTT…SMESTKETRY (179 aa)) is modulating. Residues 144 to 173 (FYRSSSDNRRQSGRERMSSANDKGPPSMES) form a disordered region. Basic and acidic residues predominate over residues 149-160 (SDNRRQSGRERM). 2 consecutive NR C4-type zinc fingers follow at residues 180–200 (CAVC…CEGC) and 216–240 (CPAT…LRKC). A DNA-binding region (nuclear receptor) is located at residues 180–245 (CAVCSDYASG…RLRKCYEVGM (66 aa)). Residues 246–302 (MKGGIRKDRRGGRLLKHKRQKEEQEQKNDVDPSEIRTASIWVNPSVKSMKLSPVLSL) form a hinge region. The segment covering 252-264 (KDRRGGRLLKHKR) has biased composition (basic residues). Positions 252–276 (KDRRGGRLLKHKRQKEEQEQKNDVD) are disordered. Over residues 265 to 276 (QKEEQEQKNDVD) the composition is skewed to basic and acidic residues. Residues 303-539 (TAEQLISALM…DLLLEMLDAH (237 aa)) enclose the NR LBD domain. The segment covering 543–556 (TPKDKTTTQEEDSR) has biased composition (basic and acidic residues). Positions 543–569 (TPKDKTTTQEEDSRSPPTTTVNGASPC) are disordered.

The protein belongs to the nuclear hormone receptor family. NR3 subfamily. As to quaternary structure, binds DNA as a homodimer. Can form a heterodimer with ER-beta.

It localises to the nucleus. The steroid hormones and their receptors are involved in the regulation of eukaryotic gene expression and affect cellular proliferation and differentiation in target tissues. In Xenopus laevis (African clawed frog), this protein is Estrogen receptor (esr1).